Reading from the N-terminus, the 524-residue chain is Decreased expression in renal and prostate cancer protein (524 aa).

The span at 1–12 (MKEPRIFPRERP) shows a compositional bias: basic and acidic residues. Disordered regions lie at residues 1 to 43 (MKEP…TGHP) and 64 to 252 (PFPR…LDAR). Positions 129–148 (LNPRTGALPGPGPLSNPRLG) are enriched in low complexity. A compositionally biased stretch (gly residues) spans 163 to 181 (GLLGAGPDPRGGGPMGPGS). Ser302 carries the phosphoserine modification. Residues 312-323 (PMGPNSGPSSRG) show a composition bias toward low complexity. Positions 312–332 (PMGPNSGPSSRGIGLPGPNPS) are disordered. An Asymmetric dimethylarginine modification is found at Arg364. Arg387 bears the Omega-N-methylarginine mark. Ser423 carries the post-translational modification Phosphoserine.

This sequence belongs to the DERPC family. Ubiquitously expressed, with abundant expression in kidney, skeletal muscle, testis, liver, ovary, and heart and moderate expression in prostate. Expression is significantly reduced in renal and prostate tumors. No differential expression in breast cancer cells, between lobular carcinoma and normal lobules.

It localises to the nucleus. Potential tumor suppressor. Inhibits prostate tumor cell growth, when overexpressed. This chain is Decreased expression in renal and prostate cancer protein, found in Homo sapiens (Human).